Reading from the N-terminus, the 197-residue chain is ATP-dependent Clp protease proteolytic subunit (197 aa).

Serine 100 acts as the Nucleophile in catalysis. Histidine 125 is a catalytic residue.

The protein belongs to the peptidase S14 family. Component of the chloroplastic Clp protease core complex.

The protein resides in the plastid. It is found in the chloroplast stroma. The enzyme catalyses Hydrolysis of proteins to small peptides in the presence of ATP and magnesium. alpha-casein is the usual test substrate. In the absence of ATP, only oligopeptides shorter than five residues are hydrolyzed (such as succinyl-Leu-Tyr-|-NHMec, and Leu-Tyr-Leu-|-Tyr-Trp, in which cleavage of the -Tyr-|-Leu- and -Tyr-|-Trp bonds also occurs).. In terms of biological role, cleaves peptides in various proteins in a process that requires ATP hydrolysis. Has a chymotrypsin-like activity. Plays a major role in the degradation of misfolded proteins. The chain is ATP-dependent Clp protease proteolytic subunit from Angiopteris evecta (Mule's foot fern).